Here is a 346-residue protein sequence, read N- to C-terminus: tRNA-specific 2-thiouridylase MnmA (346 aa).

Residue 6–13 (AMSGGTDS) participates in ATP binding. C90 serves as the catalytic Nucleophile. C90 and C187 are joined by a disulfide. G114 lines the ATP pocket. Positions 137 to 139 (KDQ) are interaction with tRNA. C187 serves as the catalytic Cysteine persulfide intermediate. Positions 292-293 (RY) are interaction with tRNA.

This sequence belongs to the MnmA/TRMU family.

The protein resides in the cytoplasm. It catalyses the reaction S-sulfanyl-L-cysteinyl-[protein] + uridine(34) in tRNA + AH2 + ATP = 2-thiouridine(34) in tRNA + L-cysteinyl-[protein] + A + AMP + diphosphate + H(+). In terms of biological role, catalyzes the 2-thiolation of uridine at the wobble position (U34) of tRNA, leading to the formation of s(2)U34. The chain is tRNA-specific 2-thiouridylase MnmA from Nitratidesulfovibrio vulgaris (strain ATCC 29579 / DSM 644 / CCUG 34227 / NCIMB 8303 / VKM B-1760 / Hildenborough) (Desulfovibrio vulgaris).